The chain runs to 345 residues: DNA-directed RNA polymerase subunit alpha (345 aa).

The alpha N-terminal domain (alpha-NTD) stretch occupies residues methionine 1 to glutamate 241. An alpha C-terminal domain (alpha-CTD) region spans residues phenylalanine 257–phenylalanine 345.

Belongs to the RNA polymerase alpha chain family. Homodimer. The RNAP catalytic core consists of 2 alpha, 1 beta, 1 beta' and 1 omega subunit. When a sigma factor is associated with the core the holoenzyme is formed, which can initiate transcription.

The enzyme catalyses RNA(n) + a ribonucleoside 5'-triphosphate = RNA(n+1) + diphosphate. DNA-dependent RNA polymerase catalyzes the transcription of DNA into RNA using the four ribonucleoside triphosphates as substrates. In Acidiphilium cryptum (strain JF-5), this protein is DNA-directed RNA polymerase subunit alpha.